The primary structure comprises 62 residues: Venom peptide 6 (62 aa).

The N-terminal stretch at 1–26 (MKSTSVFILFAGIAIMACLQMTGTEA) is a signal peptide. AXPX repeat units lie at residues 26–29 (AAPS), 30–33 (ASPN), and 40–43 (ADPD). The propeptide occupies 27–46 (APSASPNPTPVARADPDPEA).

The protein belongs to the MCD family. In terms of tissue distribution, expressed by the venom gland.

Its subcellular location is the secreted. The protein localises to the target cell membrane. Antimicrobial peptide with strong activity against the fungus B.cinerea (MIC=5 uM) and the Gram-positive bacterium S.aureus (MIC=50 uM), and no activity against C.albicans (MIC&gt;200 uM), and the Gram-negative bacterium E.coli (MIC&gt;200 uM). Shows cytolytic activity against insect cell lines. Has no hemolytic activity against human erythrocytes. In vivo, peptide injection in the vicinity of the head and thorax of lepidopteran larvae induces feeding disorder that lasts one or two days before recovering. The polypeptide is Venom peptide 6 (Eumenes pomiformis (Potter wasp)).